The sequence spans 32 residues: Tail virion protein G9P (32 aa).

Residues 4 to 24 (LSYFFAAYCIGWVISHSILVF) traverse the membrane as a helical segment.

This sequence belongs to the inovirus G9P protein family.

The protein resides in the virion. The protein localises to the host membrane. Functionally, may initiate with G7P the virion concomitant assembly-budding process, by interacting with the packaging signal of the viral genome. The assembly-budding takes place at the host inner membrane. In turn, G7P and G9P are present at the end of the filamentous virion that emerges first from the bacterial host. The protein is Tail virion protein G9P (IX) of Escherichia phage If1 (Bacteriophage If1).